Consider the following 127-residue polypeptide: Large ribosomal subunit protein bL17 (127 aa).

It belongs to the bacterial ribosomal protein bL17 family. Part of the 50S ribosomal subunit. Contacts protein L32.

This is Large ribosomal subunit protein bL17 from Haemophilus ducreyi (strain 35000HP / ATCC 700724).